The sequence spans 377 residues: Cytochrome b (377 aa).

A run of 4 helical transmembrane segments spans residues 33-53 (FGSLLGLCLITQIMTGLFLAM), 77-98 (WLIRIIHANGASLFFICLYLHT), 113-133 (WTMGVILMFLVMGTAFMGYVL), and 178-198 (FFMIHFLLPFLIIGGLLVHLL). Residues His-83 and His-97 each coordinate heme b. Residues His-182 and His-196 each coordinate heme b. A ubiquinone is bound at residue His-201. Helical transmembrane passes span 226-246 (YKDLVGVLIIMSGLLLLSLLS), 288-308 (LGGVIALVLSVSILFILPLSS), 320-340 (FNQIMFWVFINLVIMLTWIGA), and 347-367 (FIIMGQTLTCSYFMYFILNPM).

The protein belongs to the cytochrome b family. In terms of assembly, the main subunits of complex b-c1 are: cytochrome b, cytochrome c1 and the Rieske protein. Requires heme b as cofactor.

It localises to the mitochondrion inner membrane. Functionally, component of the ubiquinol-cytochrome c reductase complex (complex III or cytochrome b-c1 complex) that is part of the mitochondrial respiratory chain. The b-c1 complex mediates electron transfer from ubiquinol to cytochrome c. Contributes to the generation of a proton gradient across the mitochondrial membrane that is then used for ATP synthesis. The polypeptide is Cytochrome b (MT-CYB) (Tetrodontophora bielanensis (Giant springtail)).